Here is a 518-residue protein sequence, read N- to C-terminus: MIPDVSQALAWLEKHPQALKGIQRGLERETLRVNADGTQATTGHPEALGSALTHKWITTDFAEALLEFITPVDGDIEHMLTFMRDLHRYTARNMGDERMWPLSMPCYIAEGQDIELAQYGTSNTGRFKTLYREGLKNRYGALMQTISGVHYNFSLPMAFWQAKCCDISGTDAKEKISAGYFRVIRNYYRFGWVIPYLFGASPAICSSFLQGKPTSLPFEKTECGMYYLPYATSLRLSDLGYTNKSQSNLGITFNDLYEYVAGLKQAIKTPSEEYAKIGIEKDGKRLQINSNVLQIENELYAPIRPKRVTRSGESPSDALLRGGIEYIEVRSLDINPFSPIGVDEQQVRFLDLFMVWCALADAPEMSSSELACTRVNWNRVILEGRKPGLTLGIGCETAQFPLPQVGKDLFRDLKRVAQTLDSINGGKAYQKVCDELVACFDNPDLTFSARILRSMIDTGIGGTGKAFAEAYRNLLREEPLEILREEDFVAEREASERRQQEMETADTEPFAVWLEKHA.

Belongs to the glutamate--cysteine ligase type 1 family. Type 1 subfamily.

The catalysed reaction is L-cysteine + L-glutamate + ATP = gamma-L-glutamyl-L-cysteine + ADP + phosphate + H(+). The protein operates within sulfur metabolism; glutathione biosynthesis; glutathione from L-cysteine and L-glutamate: step 1/2. The sequence is that of Glutamate--cysteine ligase from Shigella boydii serotype 4 (strain Sb227).